The sequence spans 185 residues: UPF0301 protein PSHAa2600 (185 aa).

This sequence belongs to the UPF0301 (AlgH) family.

This is UPF0301 protein PSHAa2600 from Pseudoalteromonas translucida (strain TAC 125).